Reading from the N-terminus, the 83-residue chain is Calsensin (83 aa).

EF-hand domains are found at residues 4-39 and 46-81; these read KVKA…LDAY and KVKE…LLCQ. Ca(2+) contacts are provided by aspartate 17, asparagine 19, aspartate 21, tyrosine 23, glutamate 28, aspartate 59, asparagine 61, aspartate 63, lysine 65, and glutamate 70.

In terms of tissue distribution, selectively expressed in a small group of neurons.

The protein localises to the cytoplasm. May function as a trigger protein which interacts with a larger protein. May mediate calcium-dependent signal transduction events in the growth cones and axons of a small group of sensory neurons which fasciculate in a single axon tract. In Haemopis marmorata (Green horse leech), this protein is Calsensin.